Reading from the N-terminus, the 783-residue chain is Polyadenylate-binding protein, cytoplasmic and nuclear (783 aa).

The disordered stretch occupies residues 16–65 (DLGNTSLGGGDNRAAPAINTNVAPGEYQTADPDTAGPTPSSAAPHPQSSA). A compositionally biased stretch (low complexity) spans 54-65 (PSSAAPHPQSSA). 4 consecutive RRM domains span residues 65 to 143 (ASLY…WSQR), 153 to 230 (GNVF…YHIP), 246 to 323 (TNIY…RAQK), and 349 to 471 (VNLY…LAQR). 3 disordered regions span residues 381–428 (MRDA…KGDR), 596–671 (AAAL…AAGG), and 752–783 (VKSQ…EEKA). Residues 396–406 (GKDKENKKEGE) are compositionally biased toward basic and acidic residues. The span at 407 to 416 (QAAEAEGEAE) shows a compositional bias: acidic residues. The span at 417–428 (GAEKKTEKKGDR) shows a compositional bias: basic and acidic residues. The segment covering 601–614 (NGRGGPGGPGGRGM) has biased composition (gly residues). Residues 630–641 (AGFPPNGRPQNG) are compositionally biased toward low complexity. The span at 642–655 (NMGGRGGPGRGGNF) shows a compositional bias: gly residues. Low complexity predominate over residues 656–671 (AAGRGAPPAGPLAAGG). Residues 676 to 753 (SSLLQSQLTA…AMAVYDEYVK (78 aa)) enclose the PABC domain. A compositionally biased stretch (basic and acidic residues) spans 770–783 (EAEKPKEEKAEEKA).

Belongs to the polyadenylate-binding protein type-1 family.

Its subcellular location is the cytoplasm. It is found in the nucleus. Functionally, binds the poly(A) tail of mRNA. Appears to be an important mediator of the multiple roles of the poly(A) tail in mRNA biogenesis, stability and translation. In the nucleus, involved in both mRNA cleavage and polyadenylation. Is also required for efficient mRNA export to the cytoplasm. Acts in concert with a poly(A)-specific nuclease (PAN) to affect poly(A) tail shortening, which may occur concomitantly with either nucleocytoplasmic mRNA transport or translational initiation. In the cytoplasm, stimulates translation initiation and regulates mRNA decay through translation termination-coupled poly(A) shortening, probably mediated by PAN. This Chaetomium globosum (strain ATCC 6205 / CBS 148.51 / DSM 1962 / NBRC 6347 / NRRL 1970) (Soil fungus) protein is Polyadenylate-binding protein, cytoplasmic and nuclear (PAB1).